A 254-amino-acid polypeptide reads, in one-letter code: tRNA (guanine-N(1)-)-methyltransferase (254 aa).

Residues G112 and 131–136 (IGDFIL) contribute to the S-adenosyl-L-methionine site.

This sequence belongs to the RNA methyltransferase TrmD family. Homodimer.

The protein resides in the cytoplasm. The catalysed reaction is guanosine(37) in tRNA + S-adenosyl-L-methionine = N(1)-methylguanosine(37) in tRNA + S-adenosyl-L-homocysteine + H(+). In terms of biological role, specifically methylates guanosine-37 in various tRNAs. The protein is tRNA (guanine-N(1)-)-methyltransferase of Persephonella marina (strain DSM 14350 / EX-H1).